A 225-amino-acid polypeptide reads, in one-letter code: 7-cyano-7-deazaguanine synthase (225 aa).

10 to 20 lines the ATP pocket; the sequence is VSGGLDSTTAL. Zn(2+) contacts are provided by cysteine 189, cysteine 199, cysteine 202, and cysteine 205.

This sequence belongs to the QueC family. The cofactor is Zn(2+).

It carries out the reaction 7-carboxy-7-deazaguanine + NH4(+) + ATP = 7-cyano-7-deazaguanine + ADP + phosphate + H2O + H(+). It functions in the pathway purine metabolism; 7-cyano-7-deazaguanine biosynthesis. Functionally, catalyzes the ATP-dependent conversion of 7-carboxy-7-deazaguanine (CDG) to 7-cyano-7-deazaguanine (preQ(0)). The polypeptide is 7-cyano-7-deazaguanine synthase (Saccharophagus degradans (strain 2-40 / ATCC 43961 / DSM 17024)).